A 279-amino-acid chain; its full sequence is Putative colanic acid biosynthesis glycosyl transferase WcaA (279 aa).

It to R.meliloti ExoO.

It functions in the pathway slime biogenesis; slime polysaccharide biosynthesis. The chain is Putative colanic acid biosynthesis glycosyl transferase WcaA (wcaA) from Escherichia coli (strain K12).